Consider the following 380-residue polypeptide: tRNA pseudouridine synthase B (380 aa).

The Nucleophile role is filled by D63. A disordered region spans residues 309-339; the sequence is QNVEDDNDDNDDNDDNDDNDDNDDNDDNDDN. The span at 311–338 shows a compositional bias: acidic residues; it reads VEDDNDDNDDNDDNDDNDDNDDNDDNDD.

This sequence belongs to the pseudouridine synthase TruB family. Type 1 subfamily.

The catalysed reaction is uridine(55) in tRNA = pseudouridine(55) in tRNA. Its function is as follows. Responsible for synthesis of pseudouridine from uracil-55 in the psi GC loop of transfer RNAs. This chain is tRNA pseudouridine synthase B, found in Psychrobacter arcticus (strain DSM 17307 / VKM B-2377 / 273-4).